Reading from the N-terminus, the 197-residue chain is Protein GrpE (197 aa).

Residues 1–27 (MSNKEQHIEKEEQLQEEKHEEQQKTEE) are compositionally biased toward basic and acidic residues. The segment at 1–34 (MSNKEQHIEKEEQLQEEKHEEQQKTEETEVEAVN) is disordered.

It belongs to the GrpE family. Homodimer.

It is found in the cytoplasm. In terms of biological role, participates actively in the response to hyperosmotic and heat shock by preventing the aggregation of stress-denatured proteins, in association with DnaK and GrpE. It is the nucleotide exchange factor for DnaK and may function as a thermosensor. Unfolded proteins bind initially to DnaJ; upon interaction with the DnaJ-bound protein, DnaK hydrolyzes its bound ATP, resulting in the formation of a stable complex. GrpE releases ADP from DnaK; ATP binding to DnaK triggers the release of the substrate protein, thus completing the reaction cycle. Several rounds of ATP-dependent interactions between DnaJ, DnaK and GrpE are required for fully efficient folding. This Pasteurella multocida (strain Pm70) protein is Protein GrpE.